The sequence spans 119 residues: Protein YdaY (119 aa).

The chain is Protein YdaY (ydaY) from Escherichia coli (strain K12).